Consider the following 1373-residue polypeptide: DNA-directed RNA polymerase subunit beta (1373 aa).

Belongs to the RNA polymerase beta chain family. In terms of assembly, the RNAP catalytic core consists of 2 alpha, 1 beta, 1 beta' and 1 omega subunit. When a sigma factor is associated with the core the holoenzyme is formed, which can initiate transcription.

The catalysed reaction is RNA(n) + a ribonucleoside 5'-triphosphate = RNA(n+1) + diphosphate. In terms of biological role, DNA-dependent RNA polymerase catalyzes the transcription of DNA into RNA using the four ribonucleoside triphosphates as substrates. The chain is DNA-directed RNA polymerase subunit beta from Rickettsia massiliae.